Consider the following 105-residue polypeptide: Small ribosomal subunit protein uS10 (105 aa).

It belongs to the universal ribosomal protein uS10 family. Part of the 30S ribosomal subunit.

In terms of biological role, involved in the binding of tRNA to the ribosomes. The chain is Small ribosomal subunit protein uS10 from Acaryochloris marina (strain MBIC 11017).